The following is a 420-amino-acid chain: Serine/threonine-protein kinase PCRK2 (420 aa).

Residues 1 to 64 (MKCFLFPLGD…SNTSMSAREN (64 aa)) are disordered. Positions 22-36 (SPTSNFSDVNKSGSD) are enriched in polar residues. Over residues 42–58 (VSGTSTVSSTGRNSNTS) the composition is skewed to low complexity. Thr-70 carries the post-translational modification Phosphothreonine. A Protein kinase domain is found at 81-366 (FSRSGMIGEG…EVLEMVTKIV (286 aa)). ATP contacts are provided by residues 87 to 95 (IGEGGFGCV) and Lys-115. The residue at position 164 (Tyr-164) is a Phosphotyrosine. Asp-215 acts as the Proton acceptor in catalysis. Phosphoserine is present on residues Ser-219 and Ser-249. Phosphothreonine occurs at positions 250 and 255. Tyr-263 carries the phosphotyrosine modification. The tract at residues 369–396 (SSPGNGGKKPQLVPLKSQETSRVEEGKN) is disordered. Residues 387–396 (ETSRVEEGKN) show a composition bias toward basic and acidic residues.

Belongs to the protein kinase superfamily. Ser/Thr protein kinase family. As to quaternary structure, interacts with FLS2.

It is found in the cell membrane. It carries out the reaction L-seryl-[protein] + ATP = O-phospho-L-seryl-[protein] + ADP + H(+). It catalyses the reaction L-threonyl-[protein] + ATP = O-phospho-L-threonyl-[protein] + ADP + H(+). In terms of biological role, functions redundantly with PCRK1 in basal resistance against bacterial pathogens and in regulation of plant immunity. Functions together with PCRK1 downstream of the pathogen-associated molecular pattern (PAMP) receptor FLS2. Contributes to the induction of SARD1 and CBP60G, which are transcriptional activator of ICS1, an enzyme involved in salicylate (SA) biosynthesis upon pathogen attack. This chain is Serine/threonine-protein kinase PCRK2, found in Arabidopsis thaliana (Mouse-ear cress).